The primary structure comprises 697 residues: Elongation factor G (697 aa).

One can recognise a tr-type G domain in the interval 8-290; sequence ERYRNIGIMA…AVLSYMPSPV (283 aa). Residues 17–24, 88–92, and 142–145 contribute to the GTP site; these read AHIDAGKT, DTPGH, and NKMD.

The protein belongs to the TRAFAC class translation factor GTPase superfamily. Classic translation factor GTPase family. EF-G/EF-2 subfamily.

Its subcellular location is the cytoplasm. Catalyzes the GTP-dependent ribosomal translocation step during translation elongation. During this step, the ribosome changes from the pre-translocational (PRE) to the post-translocational (POST) state as the newly formed A-site-bound peptidyl-tRNA and P-site-bound deacylated tRNA move to the P and E sites, respectively. Catalyzes the coordinated movement of the two tRNA molecules, the mRNA and conformational changes in the ribosome. The chain is Elongation factor G from Nitrosococcus oceani (strain ATCC 19707 / BCRC 17464 / JCM 30415 / NCIMB 11848 / C-107).